Here is a 115-residue protein sequence, read N- to C-terminus: UPF0145 protein lp_2083 (115 aa).

This sequence belongs to the UPF0145 family.

This Lactiplantibacillus plantarum (strain ATCC BAA-793 / NCIMB 8826 / WCFS1) (Lactobacillus plantarum) protein is UPF0145 protein lp_2083.